Consider the following 224-residue polypeptide: Octanoyl-[acyl-carrier-protein]:protein N-octanoyltransferase LIPT2, mitochondrial (224 aa).

A BPL/LPL catalytic domain is found at 37-217 (SNIPNTLLLC…AFTEQFNCTL (181 aa)). Substrate contacts are provided by residues 81 to 88 (RGGLITFH), 147 to 149 (AIG), and 160 to 162 (GLA). The Acyl-thioester intermediate role is filled by Cys-178.

The protein belongs to the LipB family.

The protein localises to the mitochondrion. It carries out the reaction octanoyl-[ACP] + L-lysyl-[protein] = N(6)-octanoyl-L-lysyl-[protein] + holo-[ACP] + H(+). Its pathway is protein modification; protein lipoylation via endogenous pathway; protein N(6)-(lipoyl)lysine from octanoyl-[acyl-carrier-protein]: step 1/2. Its function is as follows. Catalyzes the transfer of endogenously produced octanoic acid from octanoyl-acyl-carrier-protein (octanoyl-ACP) onto the lipoyl domains of lipoate-dependent enzymes such as the protein H of the glycine cleavage system (GCSH). Lipoyl-ACP can also act as a substrate although octanoyl-ACP is likely to be the physiological substrate. In Danio rerio (Zebrafish), this protein is Octanoyl-[acyl-carrier-protein]:protein N-octanoyltransferase LIPT2, mitochondrial (lipt2).